Reading from the N-terminus, the 420-residue chain is Pre-mRNA-splicing factor RBM22 (420 aa).

An N-acetylalanine modification is found at Ala2. 2 positions are modified to phosphoserine: Ser4 and Ser102. Residues Lys139 and Lys149 each participate in a glycyl lysine isopeptide (Lys-Gly) (interchain with G-Cter in SUMO2) cross-link. The C3H1-type zinc-finger motif lies at 159-186; sequence RNRPHICSFWVKGECKRGEECPYRHEKP. Lys212 bears the N6-acetyllysine mark. One can recognise an RRM domain in the interval 232 to 305; sequence TTLYVGGLGD…RRLNVKWGRS (74 aa). Residue Lys290 forms a Glycyl lysine isopeptide (Lys-Gly) (interchain with G-Cter in SUMO2) linkage. 2 disordered regions span residues 303-343 and 372-420; these read GRSQ…AAEE and APPP…HSSP. The span at 309–318 shows a compositional bias: basic and acidic residues; the sequence is RGKEKEKDGT.

It belongs to the SLT11 family. In terms of assembly, component of the pre-catalytic and catalytic spliceosome complexes. Component of the postcatalytic spliceosome P complex. Interacts with PDCD6; the interaction induces translocation of PDCD6 in the cytoplasm. Interacts with PPIL1.

Its subcellular location is the nucleus. The protein resides in the cytoplasm. In terms of biological role, required for pre-mRNA splicing as component of the activated spliceosome. Involved in the first step of pre-mRNA splicing. Binds directly to the internal stem-loop (ISL) domain of the U6 snRNA and to the pre-mRNA intron near the 5' splice site during the activation and catalytic phases of the spliceosome cycle. Involved in both translocations of the nuclear SLU7 to the cytoplasm and the cytosolic calcium-binding protein PDCD6 to the nucleus upon cellular stress responses. The sequence is that of Pre-mRNA-splicing factor RBM22 (RBM22) from Bos taurus (Bovine).